The sequence spans 387 residues: ATP phosphoribosyltransferase regulatory subunit (387 aa).

This sequence belongs to the class-II aminoacyl-tRNA synthetase family. HisZ subfamily. In terms of assembly, heteromultimer composed of HisG and HisZ subunits.

It is found in the cytoplasm. It functions in the pathway amino-acid biosynthesis; L-histidine biosynthesis; L-histidine from 5-phospho-alpha-D-ribose 1-diphosphate: step 1/9. In terms of biological role, required for the first step of histidine biosynthesis. May allow the feedback regulation of ATP phosphoribosyltransferase activity by histidine. This Polynucleobacter necessarius subsp. necessarius (strain STIR1) protein is ATP phosphoribosyltransferase regulatory subunit.